Here is a 312-residue protein sequence, read N- to C-terminus: Homoserine O-acetyltransferase (312 aa).

Cysteine 142 functions as the Acyl-thioester intermediate in the catalytic mechanism. 2 residues coordinate substrate: lysine 163 and serine 192. The active-site Proton acceptor is histidine 235. Glutamate 237 is a catalytic residue. Arginine 249 is a substrate binding site.

This sequence belongs to the MetA family.

The protein localises to the cytoplasm. It carries out the reaction L-homoserine + acetyl-CoA = O-acetyl-L-homoserine + CoA. It participates in amino-acid biosynthesis; L-methionine biosynthesis via de novo pathway; O-acetyl-L-homoserine from L-homoserine: step 1/1. Its function is as follows. Transfers an acetyl group from acetyl-CoA to L-homoserine, forming acetyl-L-homoserine. The chain is Homoserine O-acetyltransferase from Chelativorans sp. (strain BNC1).